Consider the following 620-residue polypeptide: MALLQIAEPGMSTAPHQHRLAVGIDLGTTNSLVATVRNSIPEILTDEEGRSLLPSVVHYLKNGSAHIGYKAQAAQNTDPKNTIVSVKRFMGRGLKDIAYAENLPYDFLDTPGMVQLKTVAGVKSPVEVSAEILATLRQQAEDALGDDLVGAVITVPAYFDDAQRQATKDAAKLAGLNVLRLLNEPTAAAIAYGLDNGSEGVFAVYDLGGGTFDVSILKLTKGVFEVLSTGGDSALGGDDFDHRLFCWIIEQAGLAPLSEIDTSVLMVKAREAKELLSSKSETLIDAVLTSGEEVHVTVTAADFIQMTQHLVTKTITPTKKALRDAGLSVDDVDGVVMVGGATRMPHIRKAVGDFFQSTPLANIDPDKVVALGAAVQANLLAGNRAAGDDWLLLDVIPLSLGIETMGGLVEKVIPRNSTIPCARAQEFTTFKDGQTALAVHIVQGERELVTDCRSLAKFELRGIPPMAAGAARIRVTYQVDADGLLSVSARELRSGVEASISVKPSYGLADDQIAQMLQDSFKSADVDMAARALREEQVEAERIVLATQSALDADASLLSDNEREDIVALLDSVRQAGSGTDHLAIKAAVDALAHGTEEFAARRMDRSVRSALSGKKLDEI.

It belongs to the heat shock protein 70 family.

Functionally, chaperone involved in the maturation of iron-sulfur cluster-containing proteins. Has a low intrinsic ATPase activity which is markedly stimulated by HscB. The polypeptide is Chaperone protein HscA homolog (Herminiimonas arsenicoxydans).